A 406-amino-acid polypeptide reads, in one-letter code: Proteasome-activating nucleotidase 1 (406 aa).

A coiled-coil region spans residues 13-72; it reads YDKDSASQQEKITALQERLEVLETQNEEMRDKLLDTNAENNKYQQKLERLTHENKKLKQS. Residues 194-199 and His333 each bind ATP; that span reads GTGKTM. A docks into pockets in the proteasome alpha-ring to cause gate opening region spans residues 404 to 406; sequence AFA.

It belongs to the AAA ATPase family. As to quaternary structure, homododecamer, in a proposed two stacked hexameric ring configuration, but may also form homohexamer. The hexameric complex has likely a two-ring architecture resembling a top hat that caps the 20S proteasome core at one or both ends. Upon ATP-binding, the C-terminus of PAN probably interacts with the alpha-rings of the proteasome core by binding to the intersubunit pockets. Interacts with SAMP1-MoaE conjugate in vitro, but does not bind to SAMP1 or MoaE alone. Interacts with NcsA.

The protein localises to the cytoplasm. Its activity is regulated as follows. ATPase activity is inhibited by EDTA in vitro. Functionally, ATPase which is responsible for recognizing, binding, unfolding and translocation of substrate proteins into the archaeal 20S proteasome core particle. Is essential for opening the gate of the 20S proteasome via an interaction with its C-terminus, thereby allowing substrate entry and access to the site of proteolysis. Thus, the C-terminus of the proteasomal ATPase functions like a 'key in a lock' to induce gate opening and therefore regulate proteolysis. Unfolding activity requires energy from ATP hydrolysis, whereas ATP binding alone promotes ATPase-20S proteasome association which triggers gate opening, and supports translocation of unfolded substrates. Is also able to cleave other nucleoside triphosphates including GTP and TTP, but the rate of hydrolysis is 4- to 5-fold slower than for ATP. The protein is Proteasome-activating nucleotidase 1 of Haloferax volcanii (strain ATCC 29605 / DSM 3757 / JCM 8879 / NBRC 14742 / NCIMB 2012 / VKM B-1768 / DS2) (Halobacterium volcanii).